The sequence spans 333 residues: HTH-type transcriptional regulator CbbR (333 aa).

The HTH lysR-type domain occupies 5-62 (WTLRQLRLVALAAASGSYAKAAQDMGLSPPAVTAQMKALEEDIGVPMFERVDGRLRPT). Positions 22-41 (YAKAAQDMGLSPPAVTAQMK) form a DNA-binding region, H-T-H motif.

It belongs to the LysR transcriptional regulatory family.

Functionally, transcriptional activator for the cbb operon (cbbLSXFP) for RuBisCO and other Calvin cycle genes. Binds specifically to two binding sites in the cbbR-cbbL intergenic region. The sequence is that of HTH-type transcriptional regulator CbbR (cbbR) from Xanthobacter flavus.